Here is a 127-residue protein sequence, read N- to C-terminus: Large-conductance mechanosensitive channel (127 aa).

The next 3 helical transmembrane spans lie at 9–29 (EFAM…GVAF), 32–52 (IVTA…LGGI), and 75–95 (VIDF…INLL).

Belongs to the MscL family. Homopentamer.

It localises to the cell inner membrane. Functionally, channel that opens in response to stretch forces in the membrane lipid bilayer. May participate in the regulation of osmotic pressure changes within the cell. In Legionella pneumophila (strain Paris), this protein is Large-conductance mechanosensitive channel.